The primary structure comprises 600 residues: Proton channel OTOP1 (600 aa).

The tract at residues 1 to 50 (MPGDRGALSSPAASSGSPSAAPSGIAACPPPPSPLARASPQASGPRRGAS) is disordered. At 1 to 56 (MPGDRGALSSPAASSGSPSAAPSGIAACPPPPSPLARASPQASGPRRGASVPQKLA) the chain is on the cytoplasmic side. Residues 7–27 (ALSSPAASSGSPSAAPSGIAA) show a composition bias toward low complexity. The helical transmembrane segment at 57 to 78 (ETLSSQYGLNVFVAGLLFLLAW) threads the bilayer. At 79–86 (AVHATGVG) the chain is on the extracellular side. The helical transmembrane segment at 87–110 (KSDLLCVLTALMLLQLLWMLWYVG) threads the bilayer. The Cytoplasmic portion of the chain corresponds to 111 to 128 (RSYMQRRLIRPKDTHAGA). A helical membrane pass occupies residues 129-151 (RWLRGSITLFAFITIVLGCLKVA). Topologically, residues 152–161 (YFIGFSECLS) are extracellular. Residues 162-186 (ATEGVFPVTHAVHTLLQVYFLWGHA) form a helical membrane-spanning segment. At 187-194 (KDIIMSFK) the chain is on the cytoplasmic side. A helical membrane pass occupies residues 195–221 (TLERFGVIHSVFTNLLLWANSVLNESK). At 222-262 (HQLNEHKERLITLGFGNITIVLDDHTPQCNCTPPALCSALS) the chain is on the extracellular side. Residues 263–288 (HGIYYLYPFNIEYQILASTMLYVLWK) traverse the membrane as a helical segment. The Cytoplasmic portion of the chain corresponds to 289–309 (NIGRRVDSSRHQKMQCRFDGV). A helical membrane pass occupies residues 310 to 332 (LVGSVLGLTVLAATIAVVVVYMI). The Extracellular portion of the chain corresponds to 333 to 342 (HIGRSKSKSE). Residues 343–368 (SALIMFYLYAITVLLLMGAAGLVGSW) traverse the membrane as a helical segment. The Cytoplasmic portion of the chain corresponds to 369 to 386 (IYRVDEKSLDESKNPARK). A helical transmembrane segment spans residues 387-411 (LDADLLVATASGSWLLSWGSILAIA). Residues 412-421 (CAETRPPYTW) lie on the Extracellular side of the membrane. The chain crosses the membrane as a helical span at residues 422–442 (YNLPYSVLVIVEKYVQNIFII). The Cytoplasmic segment spans residues 443–532 (ESVHLEPEGV…QGGMKRRLLR (90 aa)). Residues 533-551 (NITAFLFLCNISLWIPPAF) form a helical membrane-spanning segment. The Extracellular segment spans residues 552–569 (GCRPEYDNGLEEIVFGFE). The chain crosses the membrane as a helical span at residues 570-593 (PWIIVVNLAMPFSIFYRMHAAAAL). Residues 594–600 (FEVYCKI) are Cytoplasmic-facing.

It belongs to the otopetrin family. As to quaternary structure, homodimer. Interacts with STAT1, independently of STAT1 phosphorylation status.

It localises to the cell membrane. The protein localises to the cell projection. It is found in the microvillus. It catalyses the reaction H(+)(in) = H(+)(out). Its activity is regulated as follows. Activated by both acid and alkali, with proton influx in response to extracellular acid and proton efflux during alkali stimulation. Inhibited by Zn(2+); this inhibition is thought to be pH-sensitive. Currents evoked in response to mild acid (pH 6.0) stimulus may also be mildly potentiated by exposure to Zn(2+). Activated by NH(4)Cl. Its function is as follows. Proton-selective ion channel. Biphasically modulated by acid and alkali, mediating proton influx and efflux in response to extracellular acid and base stimulation, respectively. Sour taste receptor, which carries inward currents in response to extracellular acidification. Sensor for ammonium chloride (NH(4)Cl) in taste receptor cells. NH(4)Cl acts by increasing the intracellular pH, thereby generating a driving force for proton entry through OTOP1 channel. Might also participate in alkaline sensation. Plays a role in the regulation of Ca(2+) flux in response to purigenic (ATP, ADP and UDP) stimuli, leading to increase in cytosolic Ca(2+) due to influx of extracellular calcium. May play this role by inhibiting P2Y purinoceptor-mediated Ca(2+) release in a Ca(2+)-dependent manner and promote an influx of Ca(2+) in response to ATP. Through this mechanism and possibly others, plays a role in the formation and function of calcium carbonate-based structures in the vestibular system of the inner ear, called otoconia, that sense gravity and linear acceleration. In obesity, may attenuate adipose tissue inflammation, through the negative regulation of IFNG signaling, hence may play an adaptive role in the maintainance of metabolic homeostasis. Following alkali activation, may also be permeable Na(+), K(+), Cs(+) and Li(+). This chain is Proton channel OTOP1, found in Rattus norvegicus (Rat).